The sequence spans 325 residues: Phosphate acyltransferase (325 aa).

Belongs to the PlsX family. In terms of assembly, homodimer. Probably interacts with PlsY.

The protein resides in the cytoplasm. It catalyses the reaction a fatty acyl-[ACP] + phosphate = an acyl phosphate + holo-[ACP]. The protein operates within lipid metabolism; phospholipid metabolism. Catalyzes the reversible formation of acyl-phosphate (acyl-PO(4)) from acyl-[acyl-carrier-protein] (acyl-ACP). This enzyme utilizes acyl-ACP as fatty acyl donor, but not acyl-CoA. The protein is Phosphate acyltransferase of Staphylococcus epidermidis (strain ATCC 35984 / DSM 28319 / BCRC 17069 / CCUG 31568 / BM 3577 / RP62A).